We begin with the raw amino-acid sequence, 249 residues long: MMEKPEGLKLIDENGRRIDGRKKYELRPIKMEVGVLKNANGSAYIEWGKNKIIAAVYGPRELHPKHLQRPDRAILRVRYNMAPFSVEERKKPGPDRRSIEISKVIKGALEPALILEMFPRTAIDVFIEVLQADAGTRVAGITAASLALADAGIPMRDLVAACAAGKIEGEIVLDLNKEEDNYGEADVPVAIMPLKNDITLLQMDGYLTKDEFIEAVKLAIKGAKAVYQKQREALKEKYLKIAQEVEGSE.

Belongs to the RNase PH family. Rrp41 subfamily. In terms of assembly, component of the archaeal exosome complex. Forms a hexameric ring-like arrangement composed of 3 Rrp41-Rrp42 heterodimers. The hexameric ring associates with a trimer of Rrp4 and/or Csl4 subunits.

It localises to the cytoplasm. In terms of biological role, catalytic component of the exosome, which is a complex involved in RNA degradation. Has 3'-&gt;5' exoribonuclease activity. Can also synthesize heteromeric RNA-tails. This chain is Exosome complex component Rrp41, found in Pyrococcus abyssi (strain GE5 / Orsay).